We begin with the raw amino-acid sequence, 51 residues long: Sperm protamine P1 (51 aa).

Belongs to the protamine P1 family. In terms of tissue distribution, testis.

It is found in the nucleus. Its subcellular location is the chromosome. Its function is as follows. Protamines substitute for histones in the chromatin of sperm during the haploid phase of spermatogenesis. They compact sperm DNA into a highly condensed, stable and inactive complex. This is Sperm protamine P1 (PRM1) from Colobus guereza (Mantled guereza).